A 202-amino-acid chain; its full sequence is Casparian strip membrane protein 4 (202 aa).

The Cytoplasmic portion of the chain corresponds to 1–40 (MKSDSIAVDVPAESSSAIKGKAPLLGLARDHTGSGGYKRG). Residues 41–61 (LSIFDFLLRLAAIVAALAAAA) form a helical membrane-spanning segment. Residues 62-90 (TMGTSDETLPFFTQFLQFEASYDDLPTFQ) are Extracellular-facing. Residues 91–111 (FFVVAIAIVTGYLVLSLPFSV) traverse the membrane as a helical segment. The Cytoplasmic segment spans residues 112 to 130 (VTIVRPLAVAPRLLLLVLD). The chain crosses the membrane as a helical span at residues 131-151 (TAALALDTAAASAAAAIVYLA). Over 152–176 (HNGNTNTNWLPICQQFGDFCQKTSG) the chain is Extracellular. The helical transmembrane segment at 177–197 (AVVSAFASVTFLAILVVISGV) threads the bilayer. The Cytoplasmic segment spans residues 198-202 (SLKRP).

Belongs to the Casparian strip membrane proteins (CASP) family. As to quaternary structure, homodimer and heterodimers.

The protein resides in the cell membrane. In terms of biological role, regulates membrane-cell wall junctions and localized cell wall deposition. Required for establishment of the Casparian strip membrane domain (CSD) and the subsequent formation of Casparian strips, a cell wall modification of the root endodermis that determines an apoplastic barrier between the intraorganismal apoplasm and the extraorganismal apoplasm and prevents lateral diffusion. The polypeptide is Casparian strip membrane protein 4 (Arabidopsis lyrata subsp. lyrata (Lyre-leaved rock-cress)).